The chain runs to 359 residues: MTTLNLRKDAAPAPAFVSAAARFGVIEKPDLAFTPAVARETEHLYEKVKDFIPAFEWAAYAPYVHAINRLKKERNAVILAHNYQTPDIFHCVADIVGDSLQLARDATKVDAEIIIQCGVHFMAETSKLLNPEKTVLIPDARAGCSLSESITGADVRLLKERYPGVPVVTYVNTSADVKAETDICCTSSNVLAVVESLESDTVLCIPDEYLAMNVARETNKKILTWKGHCEVHERFTAAELLAYKEANPGIEIVGHPECHPDVIAVCDFSGSTSGMINYVKDKRPQRVLLVTECSMASNIQAEVKGVDFVKPCNLCPHMKRITLPKIFDSLLTMTEEVLVDPAIADRARLAVERMVNLKQ.

2 residues coordinate iminosuccinate: histidine 81 and serine 99. Position 144 (cysteine 144) interacts with [4Fe-4S] cluster. Residues 170–172 and serine 187 each bind iminosuccinate; that span reads YVN. Cysteine 229 serves as a coordination point for [4Fe-4S] cluster. Iminosuccinate is bound by residues 255–257 and threonine 272; that span reads HPE. Cysteine 315 contacts [4Fe-4S] cluster.

It belongs to the quinolinate synthase family. Type 2 subfamily. [4Fe-4S] cluster serves as cofactor.

It localises to the cytoplasm. The enzyme catalyses iminosuccinate + dihydroxyacetone phosphate = quinolinate + phosphate + 2 H2O + H(+). The protein operates within cofactor biosynthesis; NAD(+) biosynthesis; quinolinate from iminoaspartate: step 1/1. Functionally, catalyzes the condensation of iminoaspartate with dihydroxyacetone phosphate to form quinolinate. In Sinorhizobium medicae (strain WSM419) (Ensifer medicae), this protein is Quinolinate synthase.